Here is a 90-residue protein sequence, read N- to C-terminus: Small ribosomal subunit protein uS17 (90 aa).

Belongs to the universal ribosomal protein uS17 family. Part of the 30S ribosomal subunit.

In terms of biological role, one of the primary rRNA binding proteins, it binds specifically to the 5'-end of 16S ribosomal RNA. The polypeptide is Small ribosomal subunit protein uS17 (Gluconobacter oxydans (strain 621H) (Gluconobacter suboxydans)).